Here is a 266-residue protein sequence, read N- to C-terminus: Undecaprenyl-diphosphatase (266 aa).

7 consecutive transmembrane segments (helical) span residues 41–61, 82–102, 106–126, 140–160, 180–200, 213–233, and 245–265; these read NLAF…VILW, YVIN…FFKD, AIFG…AALL, ISMK…LPGL, LAQF…LLDG, IPTL…CLAC, and LIYF…VSQL.

The protein belongs to the UppP family.

The protein resides in the cell inner membrane. It carries out the reaction di-trans,octa-cis-undecaprenyl diphosphate + H2O = di-trans,octa-cis-undecaprenyl phosphate + phosphate + H(+). Its function is as follows. Catalyzes the dephosphorylation of undecaprenyl diphosphate (UPP). Confers resistance to bacitracin. This chain is Undecaprenyl-diphosphatase, found in Bacteroides fragilis (strain YCH46).